Consider the following 105-residue polypeptide: V-type ATP synthase subunit F (105 aa).

It belongs to the V-ATPase F subunit family.

Produces ATP from ADP in the presence of a proton gradient across the membrane. The chain is V-type ATP synthase subunit F from Fusobacterium nucleatum subsp. nucleatum (strain ATCC 25586 / DSM 15643 / BCRC 10681 / CIP 101130 / JCM 8532 / KCTC 2640 / LMG 13131 / VPI 4355).